Consider the following 138-residue polypeptide: Large ribosomal subunit protein bL17 (138 aa).

It belongs to the bacterial ribosomal protein bL17 family. As to quaternary structure, part of the 50S ribosomal subunit. Contacts protein L32.

This is Large ribosomal subunit protein bL17 from Buchnera aphidicola subsp. Schizaphis graminum (strain Sg).